A 690-amino-acid polypeptide reads, in one-letter code: Protein-glucosylgalactosylhydroxylysine glucosidase (690 aa).

Residue tryptophan 299–aspartate 300 coordinates substrate. Catalysis depends on glutamate 429, which acts as the Proton donor. Residue lysine 497–glutamine 498 coordinates substrate.

The protein belongs to the glycosyl hydrolase 65 family.

The catalysed reaction is (5R)-5-O-[alpha-D-glucosyl-(1-&gt;2)-beta-D-galactosyl]-5-hydroxy-L-lysyl-[collagen] + H2O = (5R)-5-O-(beta-D-galactosyl)-5-hydroxy-L-lysyl-[collagen] + D-glucose. In terms of biological role, catalyzes the hydrolysis of glucose from the disaccharide unit linked to hydroxylysine residues of collagen and collagen-like proteins. The chain is Protein-glucosylgalactosylhydroxylysine glucosidase from Mus musculus (Mouse).